A 293-amino-acid chain; its full sequence is Small ribosomal subunit protein uS2 (293 aa).

The tract at residues 239–293 is disordered; sequence PAGGADWEAAPAGFPAAATGEWSEAQPATWESGAAAATGPSTEWADSAPKDTAGW. Over residues 247 to 256 the composition is skewed to low complexity; that stretch reads AAPAGFPAAA.

Belongs to the universal ribosomal protein uS2 family. Component of the small ribosomal subunit. Mature ribosomes consist of a small (40S) and a large (60S) subunit. The 40S subunit contains about 33 different proteins and 1 molecule of RNA (18S). The 60S subunit contains about 49 different proteins and 3 molecules of RNA (25S, 5.8S and 5S). Interacts with RPS21.

It localises to the cytoplasm. Functionally, required for the assembly and/or stability of the 40S ribosomal subunit. Required for the processing of the 20S rRNA-precursor to mature 18S rRNA in a late step of the maturation of 40S ribosomal subunits. The protein is Small ribosomal subunit protein uS2 of Chaetomium globosum (strain ATCC 6205 / CBS 148.51 / DSM 1962 / NBRC 6347 / NRRL 1970) (Soil fungus).